The chain runs to 226 residues: UPF0758 protein GTNG_2548 (226 aa).

An MPN domain is found at 104–226 (VIRCPEDGAK…FISLKEKGYV (123 aa)). Zn(2+) contacts are provided by His-175, His-177, and Asp-188. The JAMM motif motif lies at 175-188 (HNHPSGDPTPSRED).

It belongs to the UPF0758 family.

The polypeptide is UPF0758 protein GTNG_2548 (Geobacillus thermodenitrificans (strain NG80-2)).